A 399-amino-acid polypeptide reads, in one-letter code: CCA-adding enzyme (399 aa).

ATP-binding residues include glycine 32 and arginine 35. Residues glycine 32 and arginine 35 each contribute to the CTP site. Residues aspartate 45 and aspartate 47 each coordinate Mg(2+). Arginine 116, aspartate 159, arginine 162, arginine 165, and arginine 168 together coordinate ATP. CTP-binding residues include arginine 116, aspartate 159, arginine 162, arginine 165, and arginine 168.

It belongs to the tRNA nucleotidyltransferase/poly(A) polymerase family. Bacterial CCA-adding enzyme type 3 subfamily. In terms of assembly, homodimer. Mg(2+) serves as cofactor.

The catalysed reaction is a tRNA precursor + 2 CTP + ATP = a tRNA with a 3' CCA end + 3 diphosphate. It carries out the reaction a tRNA with a 3' CCA end + 2 CTP + ATP = a tRNA with a 3' CCACCA end + 3 diphosphate. In terms of biological role, catalyzes the addition and repair of the essential 3'-terminal CCA sequence in tRNAs without using a nucleic acid template. Adds these three nucleotides in the order of C, C, and A to the tRNA nucleotide-73, using CTP and ATP as substrates and producing inorganic pyrophosphate. tRNA 3'-terminal CCA addition is required both for tRNA processing and repair. Also involved in tRNA surveillance by mediating tandem CCA addition to generate a CCACCA at the 3' terminus of unstable tRNAs. While stable tRNAs receive only 3'-terminal CCA, unstable tRNAs are marked with CCACCA and rapidly degraded. The protein is CCA-adding enzyme of Streptococcus sanguinis (strain SK36).